Reading from the N-terminus, the 190-residue chain is Surfactant protein C (190 aa).

Positions 1–23 (MDVGSKEVLIENPPDYSAAPQGR) are excised as a propeptide. Residue C28 is the site of S-palmitoyl cysteine attachment. The propeptide occupies 59 to 190 (HMSQKHTEMV…LCGEVPLYYI (132 aa)). Positions 94–190 (FSIGSTGIVV…LCGEVPLYYI (97 aa)) constitute a BRICHOS domain. C121 and C182 are disulfide-bonded.

It is found in the secreted. It localises to the extracellular space. The protein resides in the surface film. Functionally, pulmonary surfactant associated proteins promote alveolar stability by lowering the surface tension at the air-liquid interface in the peripheral air spaces. The polypeptide is Surfactant protein C (SFTPC) (Neovison vison (American mink)).